A 209-amino-acid chain; its full sequence is PF03932 family protein CutC (209 aa).

Its subcellular location is the cytoplasm. In Streptococcus pyogenes serotype M6 (strain ATCC BAA-946 / MGAS10394), this protein is PF03932 family protein CutC.